Here is a 450-residue protein sequence, read N- to C-terminus: tRNA modification GTPase MnmE (450 aa).

(6S)-5-formyl-5,6,7,8-tetrahydrofolate-binding residues include arginine 20, glutamate 78, and lysine 117. Positions 211 to 372 (GFRMVIVGKP…LEEAIYRETQ (162 aa)) constitute a TrmE-type G domain. Asparagine 221 contributes to the K(+) binding site. Residues 221–226 (NVGKST), 240–246 (TDIPGTT), and 265–268 (DTAG) each bind GTP. Serine 225 contacts Mg(2+). Residues threonine 240, isoleucine 242, and threonine 245 each contribute to the K(+) site. Threonine 246 lines the Mg(2+) pocket. Residue lysine 450 coordinates (6S)-5-formyl-5,6,7,8-tetrahydrofolate.

This sequence belongs to the TRAFAC class TrmE-Era-EngA-EngB-Septin-like GTPase superfamily. TrmE GTPase family. In terms of assembly, homodimer. Heterotetramer of two MnmE and two MnmG subunits. Requires K(+) as cofactor.

The protein resides in the cytoplasm. In terms of biological role, exhibits a very high intrinsic GTPase hydrolysis rate. Involved in the addition of a carboxymethylaminomethyl (cmnm) group at the wobble position (U34) of certain tRNAs, forming tRNA-cmnm(5)s(2)U34. The polypeptide is tRNA modification GTPase MnmE (Thermotoga petrophila (strain ATCC BAA-488 / DSM 13995 / JCM 10881 / RKU-1)).